We begin with the raw amino-acid sequence, 134 residues long: ATP synthase epsilon chain, chloroplastic (134 aa).

This sequence belongs to the ATPase epsilon chain family. As to quaternary structure, F-type ATPases have 2 components, CF(1) - the catalytic core - and CF(0) - the membrane proton channel. CF(1) has five subunits: alpha(3), beta(3), gamma(1), delta(1), epsilon(1). CF(0) has three main subunits: a, b and c.

Its subcellular location is the plastid. It localises to the chloroplast thylakoid membrane. Produces ATP from ADP in the presence of a proton gradient across the membrane. The polypeptide is ATP synthase epsilon chain, chloroplastic (Phalaenopsis aphrodite subsp. formosana (Moth orchid)).